A 286-amino-acid polypeptide reads, in one-letter code: 3-methyl-2-oxobutanoate hydroxymethyltransferase (286 aa).

Residues D67 and D106 each coordinate Mg(2+). 3-methyl-2-oxobutanoate is bound by residues 67–68, D106, and K136; that span reads DS. Position 138 (E138) interacts with Mg(2+). E204 acts as the Proton acceptor in catalysis.

Belongs to the PanB family. As to quaternary structure, homodecamer; pentamer of dimers. Mg(2+) serves as cofactor.

It is found in the cytoplasm. It catalyses the reaction 3-methyl-2-oxobutanoate + (6R)-5,10-methylene-5,6,7,8-tetrahydrofolate + H2O = 2-dehydropantoate + (6S)-5,6,7,8-tetrahydrofolate. It participates in cofactor biosynthesis; (R)-pantothenate biosynthesis; (R)-pantoate from 3-methyl-2-oxobutanoate: step 1/2. Functionally, catalyzes the reversible reaction in which hydroxymethyl group from 5,10-methylenetetrahydrofolate is transferred onto alpha-ketoisovalerate to form ketopantoate. The protein is 3-methyl-2-oxobutanoate hydroxymethyltransferase of Mycobacterium leprae (strain TN).